The following is a 455-amino-acid chain: Probable glycine dehydrogenase (decarboxylating) subunit 1 (455 aa).

Belongs to the GcvP family. N-terminal subunit subfamily. The glycine cleavage system is composed of four proteins: P, T, L and H. In this organism, the P 'protein' is a heterodimer of two subunits.

It carries out the reaction N(6)-[(R)-lipoyl]-L-lysyl-[glycine-cleavage complex H protein] + glycine + H(+) = N(6)-[(R)-S(8)-aminomethyldihydrolipoyl]-L-lysyl-[glycine-cleavage complex H protein] + CO2. Its function is as follows. The glycine cleavage system catalyzes the degradation of glycine. The P protein binds the alpha-amino group of glycine through its pyridoxal phosphate cofactor; CO(2) is released and the remaining methylamine moiety is then transferred to the lipoamide cofactor of the H protein. In Saccharolobus solfataricus (strain ATCC 35092 / DSM 1617 / JCM 11322 / P2) (Sulfolobus solfataricus), this protein is Probable glycine dehydrogenase (decarboxylating) subunit 1.